The chain runs to 252 residues: Ribosomal RNA small subunit methyltransferase J (252 aa).

S-adenosyl-L-methionine is bound by residues 101–102, 117–118, 153–154, and aspartate 171; these read RD, ER, and SS.

This sequence belongs to the methyltransferase superfamily. RsmJ family.

The protein localises to the cytoplasm. It catalyses the reaction guanosine(1516) in 16S rRNA + S-adenosyl-L-methionine = N(2)-methylguanosine(1516) in 16S rRNA + S-adenosyl-L-homocysteine + H(+). Functionally, specifically methylates the guanosine in position 1516 of 16S rRNA. This is Ribosomal RNA small subunit methyltransferase J from Salmonella typhi.